A 161-amino-acid polypeptide reads, in one-letter code: Large ribosomal subunit protein uL30m (161 aa).

The transit peptide at 1–34 directs the protein to the mitochondrion; sequence MAGILRLVVQWPPGRLQTVTKGVESLICTDWIRH.

This sequence belongs to the universal ribosomal protein uL30 family. Component of the mitochondrial large ribosomal subunit (mt-LSU). Mature mammalian 55S mitochondrial ribosomes consist of a small (28S) and a large (39S) subunit. The 28S small subunit contains a 12S ribosomal RNA (12S mt-rRNA) and 30 different proteins. The 39S large subunit contains a 16S rRNA (16S mt-rRNA), a copy of mitochondrial valine transfer RNA (mt-tRNA(Val)), which plays an integral structural role, and 52 different proteins.

Its subcellular location is the mitochondrion. The chain is Large ribosomal subunit protein uL30m (MRPL30) from Homo sapiens (Human).